Consider the following 227-residue polypeptide: Lipoprotein-releasing system ATP-binding protein LolD (227 aa).

In terms of domain architecture, ABC transporter spans 7–227; it reads LSCRNLGKSY…RLEGGRLVEA (221 aa). Position 43–50 (43–50) interacts with ATP; that stretch reads GTSGSGKS.

This sequence belongs to the ABC transporter superfamily. Lipoprotein translocase (TC 3.A.1.125) family. As to quaternary structure, the complex is composed of two ATP-binding proteins (LolD) and two transmembrane proteins (LolC and LolE).

The protein resides in the cell inner membrane. Part of the ABC transporter complex LolCDE involved in the translocation of mature outer membrane-directed lipoproteins, from the inner membrane to the periplasmic chaperone, LolA. Responsible for the formation of the LolA-lipoprotein complex in an ATP-dependent manner. This Pseudomonas syringae pv. tomato (strain ATCC BAA-871 / DC3000) protein is Lipoprotein-releasing system ATP-binding protein LolD.